We begin with the raw amino-acid sequence, 311 residues long: Malate dehydrogenase (311 aa).

Residues 7 to 13 (GAAGGIG) and Asp34 contribute to the NAD(+) site. Residues Arg81 and Arg87 each coordinate substrate. Residues Asn94 and 117–119 (ITN) contribute to the NAD(+) site. The substrate site is built by Asn119 and Arg153. The Proton acceptor role is filled by His177. Met227 lines the NAD(+) pocket.

The protein belongs to the LDH/MDH superfamily. MDH type 1 family. Homodimer.

It catalyses the reaction (S)-malate + NAD(+) = oxaloacetate + NADH + H(+). In terms of biological role, catalyzes the reversible oxidation of malate to oxaloacetate. The sequence is that of Malate dehydrogenase from Shewanella baltica (strain OS155 / ATCC BAA-1091).